A 120-amino-acid chain; its full sequence is Large ribosomal subunit protein uL18 (120 aa).

It belongs to the universal ribosomal protein uL18 family. Part of the 50S ribosomal subunit; part of the 5S rRNA/L5/L18/L25 subcomplex. Contacts the 5S and 23S rRNAs.

Its function is as follows. This is one of the proteins that bind and probably mediate the attachment of the 5S RNA into the large ribosomal subunit, where it forms part of the central protuberance. This Methylorubrum extorquens (strain CM4 / NCIMB 13688) (Methylobacterium extorquens) protein is Large ribosomal subunit protein uL18.